The following is a 318-amino-acid chain: tRNA U34 carboxymethyltransferase (318 aa).

Carboxy-S-adenosyl-L-methionine contacts are provided by Lys-88, Trp-102, Lys-107, Gly-126, Met-192, Tyr-196, and Arg-311.

Belongs to the class I-like SAM-binding methyltransferase superfamily. CmoB family. Homotetramer.

The catalysed reaction is carboxy-S-adenosyl-L-methionine + 5-hydroxyuridine(34) in tRNA = 5-carboxymethoxyuridine(34) in tRNA + S-adenosyl-L-homocysteine + H(+). Catalyzes carboxymethyl transfer from carboxy-S-adenosyl-L-methionine (Cx-SAM) to 5-hydroxyuridine (ho5U) to form 5-carboxymethoxyuridine (cmo5U) at position 34 in tRNAs. This chain is tRNA U34 carboxymethyltransferase, found in Pseudomonas fluorescens (strain SBW25).